A 233-amino-acid chain; its full sequence is Outer membrane protein MIP (233 aa).

The first 20 residues, 1–20, serve as a signal peptide directing secretion; it reads MKMKLVTAAVMGLAMSTAMA. The 90-residue stretch at 144–233 folds into the PPIase FKBP-type domain; it reads SDTVTVEYTG…IHLISVKKSS (90 aa).

Belongs to the FKBP-type PPIase family.

The protein localises to the cell outer membrane. The catalysed reaction is [protein]-peptidylproline (omega=180) = [protein]-peptidylproline (omega=0). Its function is as follows. Essential virulence factor associated with macrophage infectivity. Exhibits PPIase activity. This Legionella pneumophila (strain Corby) protein is Outer membrane protein MIP (mip).